The sequence spans 652 residues: Acetyl-coenzyme A synthetase (652 aa).

CoA contacts are provided by residues 191–194 and T311; that span reads RAGN. ATP contacts are provided by residues 387–389, 411–416, D503, and R518; these read GEP and DTWWQT. S526 contacts CoA. R529 serves as a coordination point for ATP. The Mg(2+) site is built by V540, H542, and V545. Residue R587 participates in CoA binding. An N6-acetyllysine modification is found at K613.

The protein belongs to the ATP-dependent AMP-binding enzyme family. It depends on Mg(2+) as a cofactor. In terms of processing, acetylated. Deacetylation by the SIR2-homolog deacetylase activates the enzyme.

It carries out the reaction acetate + ATP + CoA = acetyl-CoA + AMP + diphosphate. Catalyzes the conversion of acetate into acetyl-CoA (AcCoA), an essential intermediate at the junction of anabolic and catabolic pathways. AcsA undergoes a two-step reaction. In the first half reaction, AcsA combines acetate with ATP to form acetyl-adenylate (AcAMP) intermediate. In the second half reaction, it can then transfer the acetyl group from AcAMP to the sulfhydryl group of CoA, forming the product AcCoA. This is Acetyl-coenzyme A synthetase from Marinomonas sp. (strain MWYL1).